The primary structure comprises 532 residues: Deoxyribodipyrimidine photo-lyase (532 aa).

A disordered region spans residues 1–57 (MDSKKRSHSTGGEAENMESQESKAKRKPLQKHQFSKSNVVQKEEKDKTEGEEKGAEG). Residues 24–34 (AKRKPLQKHQF) show a composition bias toward basic residues. Basic and acidic residues predominate over residues 41-55 (QKEEKDKTEGEEKGA). In terms of domain architecture, Photolyase/cryptochrome alpha/beta spans 97 to 229 (QAFVYWMSRD…QVDAHNIVPC (133 aa)). Residue Arg322 participates in DNA binding. 2 interaction with DNA regions span residues 368-376 (EAVVRRELA) and 442-443 (GF). 468–470 (YLN) is a binding site for FAD.

The protein belongs to the DNA photolyase class-2 family. FAD serves as cofactor.

It catalyses the reaction cyclobutadipyrimidine (in DNA) = 2 pyrimidine residues (in DNA).. Functionally, involved in repair of UV radiation-induced DNA damage. Catalyzes the light-dependent monomerization (300-600 nm) of cyclobutyl pyrimidine dimers (in cis-syn configuration), which are formed between adjacent bases on the same DNA strand upon exposure to ultraviolet radiation. The polypeptide is Deoxyribodipyrimidine photo-lyase (PHR) (Potorous tridactylus (Potoroo)).